A 199-amino-acid polypeptide reads, in one-letter code: Adenylate kinase (199 aa).

8 to 13 lines the ATP pocket; the sequence is GAGKGT. Positions 28-57 are NMP; sequence STGDIFRANIKNKTELGQQVKAIVDAGDYV. Residues Thr29, Arg34, 55–57, 83–86, and Gln90 contribute to the AMP site; these read DYV and GYPR. Residues 124–134 are LID; that stretch reads KRAREQGRADD. Residue Arg125 coordinates ATP. Positions 131 and 142 each coordinate AMP. Gly170 serves as a coordination point for ATP.

It belongs to the adenylate kinase family. Monomer.

The protein localises to the cytoplasm. It catalyses the reaction AMP + ATP = 2 ADP. It participates in purine metabolism; AMP biosynthesis via salvage pathway; AMP from ADP: step 1/1. Functionally, catalyzes the reversible transfer of the terminal phosphate group between ATP and AMP. Plays an important role in cellular energy homeostasis and in adenine nucleotide metabolism. This chain is Adenylate kinase, found in Leifsonia xyli subsp. xyli (strain CTCB07).